The following is a 393-amino-acid chain: uncharacterized protein (393 aa).

A B box-type zinc finger spans residues 6–47 (KYDNKCAIHKEHKIKMICATCKDVVCNECILLDHNGHKFGRI). Zn(2+) is bound by residues Cys11, His14, Cys34, and His39.

This is an uncharacterized protein from Dictyostelium discoideum (Social amoeba).